We begin with the raw amino-acid sequence, 199 residues long: Probable molybdenum cofactor guanylyltransferase (199 aa).

GTP-binding positions include 9–11, Lys21, Asp69, and Asp100; that span reads LAG. Asp100 is a binding site for Mg(2+).

This sequence belongs to the MobA family. Requires Mg(2+) as cofactor.

The protein resides in the cytoplasm. It catalyses the reaction Mo-molybdopterin + GTP + H(+) = Mo-molybdopterin guanine dinucleotide + diphosphate. Its function is as follows. Transfers a GMP moiety from GTP to Mo-molybdopterin (Mo-MPT) cofactor (Moco or molybdenum cofactor) to form Mo-molybdopterin guanine dinucleotide (Mo-MGD) cofactor. This Bacillus cytotoxicus (strain DSM 22905 / CIP 110041 / 391-98 / NVH 391-98) protein is Probable molybdenum cofactor guanylyltransferase.